Here is a 393-residue protein sequence, read N- to C-terminus: Diphosphomevalonate decarboxylase (393 aa).

(R)-5-diphosphomevalonate contacts are provided by residues 21–24 (YWGK), Arg77, 156–161 (SGSACR), and Thr212.

The protein belongs to the diphosphomevalonate decarboxylase family. In terms of assembly, homodimer.

Its subcellular location is the cytoplasm. It localises to the nucleus. It carries out the reaction (R)-5-diphosphomevalonate + ATP = isopentenyl diphosphate + ADP + phosphate + CO2. Its pathway is isoprenoid biosynthesis; isopentenyl diphosphate biosynthesis via mevalonate pathway; isopentenyl diphosphate from (R)-mevalonate: step 3/3. Its function is as follows. Diphosphomevalonate decarboxylase; part of the second module of ergosterol biosynthesis pathway that includes the middle steps of the pathway. Mvd1 converts diphosphomevalonate into isopentenyl diphosphate. The second module is carried out in the vacuole and involves the formation of farnesyl diphosphate, which is also an important intermediate in the biosynthesis of ubiquinone, dolichol, heme and prenylated proteins. Activity by the mevalonate kinase erg12 first converts mevalonate into 5-phosphomevalonate. 5-phosphomevalonate is then further converted to 5-diphosphomevalonate by the phosphomevalonate kinase erg8. The diphosphomevalonate decarboxylase mvd1 then produces isopentenyl diphosphate. The isopentenyl-diphosphate delta-isomerase idi1 then catalyzes the 1,3-allylic rearrangement of the homoallylic substrate isopentenyl (IPP) to its highly electrophilic allylic isomer, dimethylallyl diphosphate (DMAPP). Finally the farnesyl diphosphate synthase fps1 catalyzes the sequential condensation of isopentenyl pyrophosphate with dimethylallyl pyrophosphate, and then with the resultant geranylpyrophosphate to the ultimate product farnesyl pyrophosphate. This Schizosaccharomyces pombe (strain 972 / ATCC 24843) (Fission yeast) protein is Diphosphomevalonate decarboxylase (mvd1).